A 391-amino-acid polypeptide reads, in one-letter code: 3-ketoacyl-CoA thiolase (391 aa).

Cys-95 (acyl-thioester intermediate) is an active-site residue. Catalysis depends on proton acceptor residues His-347 and Cys-377.

This sequence belongs to the thiolase-like superfamily. Thiolase family. Heterotetramer of two alpha chains (FadB) and two beta chains (FadA).

It is found in the cytoplasm. The catalysed reaction is an acyl-CoA + acetyl-CoA = a 3-oxoacyl-CoA + CoA. It participates in lipid metabolism; fatty acid beta-oxidation. In terms of biological role, catalyzes the final step of fatty acid oxidation in which acetyl-CoA is released and the CoA ester of a fatty acid two carbons shorter is formed. The chain is 3-ketoacyl-CoA thiolase from Pseudomonas syringae pv. syringae (strain B728a).